A 308-amino-acid polypeptide reads, in one-letter code: Ribosomal RNA large subunit methyltransferase F (308 aa).

Belongs to the methyltransferase superfamily. METTL16/RlmF family.

The protein localises to the cytoplasm. It catalyses the reaction adenosine(1618) in 23S rRNA + S-adenosyl-L-methionine = N(6)-methyladenosine(1618) in 23S rRNA + S-adenosyl-L-homocysteine + H(+). Its function is as follows. Specifically methylates the adenine in position 1618 of 23S rRNA. The protein is Ribosomal RNA large subunit methyltransferase F of Escherichia coli (strain K12 / MC4100 / BW2952).